Consider the following 471-residue polypeptide: Glutamate--tRNA ligase (471 aa).

Positions 9-19 (PSPTGYLHVGG) match the 'HIGH' region motif. The Zn(2+) site is built by Cys98, Cys100, Cys125, and His127. The short motif at 237–241 (KLSKR) is the 'KMSKS' region element. Residue Lys240 coordinates ATP.

The protein belongs to the class-I aminoacyl-tRNA synthetase family. Glutamate--tRNA ligase type 1 subfamily. Monomer. The cofactor is Zn(2+).

The protein localises to the cytoplasm. The catalysed reaction is tRNA(Glu) + L-glutamate + ATP = L-glutamyl-tRNA(Glu) + AMP + diphosphate. Catalyzes the attachment of glutamate to tRNA(Glu) in a two-step reaction: glutamate is first activated by ATP to form Glu-AMP and then transferred to the acceptor end of tRNA(Glu). This is Glutamate--tRNA ligase from Enterobacter sp. (strain 638).